Here is a 342-residue protein sequence, read N- to C-terminus: N-acetyl-gamma-glutamyl-phosphate reductase (342 aa).

The active site involves cysteine 146.

This sequence belongs to the NAGSA dehydrogenase family. Type 1 subfamily.

The protein resides in the cytoplasm. It carries out the reaction N-acetyl-L-glutamate 5-semialdehyde + phosphate + NADP(+) = N-acetyl-L-glutamyl 5-phosphate + NADPH + H(+). It functions in the pathway amino-acid biosynthesis; L-arginine biosynthesis; N(2)-acetyl-L-ornithine from L-glutamate: step 3/4. Its function is as follows. Catalyzes the NADPH-dependent reduction of N-acetyl-5-glutamyl phosphate to yield N-acetyl-L-glutamate 5-semialdehyde. This Thermobifida fusca (strain YX) protein is N-acetyl-gamma-glutamyl-phosphate reductase.